Consider the following 2174-residue polypeptide: Mediator of RNA polymerase II transcription subunit 13 (2174 aa).

The residue at position 395 (S395) is a Phosphoserine. Positions 435 to 477 (RNAGQQGQAPSLGQQQQILPKHKTNEKQEKSEKPQKRPLTPFH) are disordered. Positions 438 to 451 (GQQGQAPSLGQQQQ) are enriched in low complexity. A compositionally biased stretch (basic and acidic residues) spans 457 to 469 (KTNEKQEKSEKPQ). S500, S504, S530, and S537 each carry phosphoserine. Residues 709–730 (FPDKKDRQNSEREAGKKHKVED) are compositionally biased toward basic and acidic residues. Disordered stretches follow at residues 709-735 (FPDK…TSSV), 749-769 (SPSI…PSTS), and 787-816 (FNSD…ESKT). Residues 805–815 (SDDKASCKESK) show a composition bias toward basic and acidic residues. 2 positions are modified to phosphoserine: S826 and S890. The segment at 959-1054 (FIKEGDGSNM…ASTPSTCRPL (96 aa)) is disordered. A compositionally biased stretch (low complexity) spans 992 to 1003 (PPSNSGAGILPS). The segment covering 1004–1015 (PSTPRFPTPRTP) has biased composition (pro residues). Residue S1029 is modified to Phosphoserine. Positions 1040-1053 (DLYSPASTPSTCRP) are enriched in polar residues. Short sequence motifs (LXXLL motif) lie at residues 1188-1192 (LILLL) and 1279-1283 (LRMLL). Polar residues-rich tracts occupy residues 1484–1498 (SQSL…NTGN) and 1563–1606 (SMNS…SLPT). Disordered regions lie at residues 1484-1505 (SQSL…PSAT), 1557-1617 (SFPP…ESTM), and 2015-2048 (LPAS…RLLS).

This sequence belongs to the Mediator complex subunit 13 family. Component of the Mediator complex, which is composed of MED1, MED4, MED6, MED7, MED8, MED9, MED10, MED11, MED12, MED13, MED13L, MED14, MED15, MED16, MED17, MED18, MED19, MED20, MED21, MED22, MED23, MED24, MED25, MED26, MED27, MED29, MED30, MED31, CCNC, CDK8 and CDC2L6/CDK11. The MED12, MED13, CCNC and CDK8 subunits form a distinct module termed the CDK8 module. Mediator containing the CDK8 module is less active than Mediator lacking this module in supporting transcriptional activation. Individual preparations of the Mediator complex lacking one or more distinct subunits have been variously termed ARC, CRSP, DRIP, PC2, SMCC and TRAP. In terms of tissue distribution, ubiquitous.

The protein localises to the nucleus. Its function is as follows. Component of the Mediator complex, a coactivator involved in the regulated transcription of nearly all RNA polymerase II-dependent genes. Mediator functions as a bridge to convey information from gene-specific regulatory proteins to the basal RNA polymerase II transcription machinery. Mediator is recruited to promoters by direct interactions with regulatory proteins and serves as a scaffold for the assembly of a functional preinitiation complex with RNA polymerase II and the general transcription factors. This is Mediator of RNA polymerase II transcription subunit 13 from Homo sapiens (Human).